A 205-amino-acid polypeptide reads, in one-letter code: Large ribosomal subunit protein uL10 (205 aa).

The disordered stretch occupies residues 167 to 205; the sequence is AQGAAPAEAKAEAPASEEKAADTPAEQPAESAPEAAPEA. Composition is skewed to low complexity over residues 169–180 and 190–205; these read GAAPAEAKAEAP and PAEQ…APEA.

It belongs to the universal ribosomal protein uL10 family. Part of the ribosomal stalk of the 50S ribosomal subunit. The N-terminus interacts with L11 and the large rRNA to form the base of the stalk. The C-terminus forms an elongated spine to which L12 dimers bind in a sequential fashion forming a multimeric L10(L12)X complex.

Functionally, forms part of the ribosomal stalk, playing a central role in the interaction of the ribosome with GTP-bound translation factors. The protein is Large ribosomal subunit protein uL10 of Treponema denticola (strain ATCC 35405 / DSM 14222 / CIP 103919 / JCM 8153 / KCTC 15104).